Here is a 374-residue protein sequence, read N- to C-terminus: Queuine tRNA-ribosyltransferase (374 aa).

The Proton acceptor role is filled by aspartate 89. Residues 89–93 (DSGGF), aspartate 143, glutamine 187, and glycine 214 contribute to the substrate site. An RNA binding region spans residues 245-251 (GVGKPED). The active-site Nucleophile is the aspartate 264. Positions 269-273 (TRNAR) are RNA binding; important for wobble base 34 recognition. Cysteine 302, cysteine 304, cysteine 307, and histidine 333 together coordinate Zn(2+).

This sequence belongs to the queuine tRNA-ribosyltransferase family. Homodimer. Within each dimer, one monomer is responsible for RNA recognition and catalysis, while the other monomer binds to the replacement base PreQ1. Zn(2+) serves as cofactor.

The enzyme catalyses 7-aminomethyl-7-carbaguanine + guanosine(34) in tRNA = 7-aminomethyl-7-carbaguanosine(34) in tRNA + guanine. Its pathway is tRNA modification; tRNA-queuosine biosynthesis. Its function is as follows. Catalyzes the base-exchange of a guanine (G) residue with the queuine precursor 7-aminomethyl-7-deazaguanine (PreQ1) at position 34 (anticodon wobble position) in tRNAs with GU(N) anticodons (tRNA-Asp, -Asn, -His and -Tyr). Catalysis occurs through a double-displacement mechanism. The nucleophile active site attacks the C1' of nucleotide 34 to detach the guanine base from the RNA, forming a covalent enzyme-RNA intermediate. The proton acceptor active site deprotonates the incoming PreQ1, allowing a nucleophilic attack on the C1' of the ribose to form the product. After dissociation, two additional enzymatic reactions on the tRNA convert PreQ1 to queuine (Q), resulting in the hypermodified nucleoside queuosine (7-(((4,5-cis-dihydroxy-2-cyclopenten-1-yl)amino)methyl)-7-deazaguanosine). This is Queuine tRNA-ribosyltransferase from Shewanella frigidimarina (strain NCIMB 400).